The following is a 55-amino-acid chain: MMKFLLVLFLITITLITMAYSEEHGCIPPFQPCEGVNSRCCGLYVCFNKICLATP.

Positions 1 to 21 (MMKFLLVLFLITITLITMAYS) are cleaved as a signal peptide. Intrachain disulfides connect Cys26/Cys41, Cys33/Cys46, and Cys40/Cys51.

This sequence belongs to the venom Ptu1-like knottin family. As to expression, expressed by the venom gland (posterior main gland) (at protein level).

The protein localises to the secreted. Functionally, binds reversibly and blocks P/Q-type voltage-gated calcium channels (Cav). The chain is U-reduvitoxin-Pr2a from Platymeris rhadamanthus (Red spot assassin bug).